Consider the following 459-residue polypeptide: UDP-N-acetylmuramoylalanine--D-glutamate ligase (459 aa).

120-126 lines the ATP pocket; that stretch reads GSNGKTT.

It belongs to the MurCDEF family.

It is found in the cytoplasm. It catalyses the reaction UDP-N-acetyl-alpha-D-muramoyl-L-alanine + D-glutamate + ATP = UDP-N-acetyl-alpha-D-muramoyl-L-alanyl-D-glutamate + ADP + phosphate + H(+). The protein operates within cell wall biogenesis; peptidoglycan biosynthesis. Cell wall formation. Catalyzes the addition of glutamate to the nucleotide precursor UDP-N-acetylmuramoyl-L-alanine (UMA). The chain is UDP-N-acetylmuramoylalanine--D-glutamate ligase from Lactobacillus helveticus (strain DPC 4571).